A 233-amino-acid chain; its full sequence is Lysine exporter LysE (233 aa).

Topologically, residues 1–2 are cytoplasmic; that stretch reads ME. The helical transmembrane segment at 3–23 threads the bilayer; sequence IFITGLLLGASLLLSIGPQNV. At 24–65 the chain is on the periplasmic side; that stretch reads LVIKQGIKREGLIAVLLVCLISDVFLFIAGTLGVDLLSNAAP. Residues 66-86 traverse the membrane as a helical segment; sequence IVLDIMRWGGIAYLLWFAVMA. The Cytoplasmic portion of the chain corresponds to 87 to 143; that stretch reads AKDAMTNKVEAPQIIEETEPTVPDDTPLGGSAVATDTRNRVRVEVSVDKQRVWVKPM. The chain crosses the membrane as a helical span at residues 144–164; sequence LMAIVLTWLNPNAYLDAFVFI. The Periplasmic portion of the chain corresponds to 165 to 176; it reads GGVGAQYGDTGR. The helical transmembrane segment at 177-197 threads the bilayer; it reads WIFAAGAFAASLIWFPLVGFG. Residues 198 to 212 are Cytoplasmic-facing; sequence AAALSRPLSSPKVWR. The helical transmembrane segment at 213-233 threads the bilayer; that stretch reads WINVVVAVVMTALAIKLMLMG.

It belongs to the LysE/ArgO transporter (TC 2.A.75) family.

It localises to the cell inner membrane. Transport process is modulated by three forces: the membrane potential, the chemical potential of lysine, and the proton gradient. Strongly inhibited by CCCP and valinomycin. Functionally, catalyzes the efflux of L-lysine. Can also export L-arginine and L-citrulline. The lysEG system prevents bacteriostasis due to elevated L-lysine or L-arginine concentrations that arise during growth in the presence of peptides or in mutants possessing a deregulated biosynthesis pathway. In vitro, can also export D-lysine during biotechnological production of D-amino acids. The protein is Lysine exporter LysE of Corynebacterium glutamicum (strain ATCC 13032 / DSM 20300 / JCM 1318 / BCRC 11384 / CCUG 27702 / LMG 3730 / NBRC 12168 / NCIMB 10025 / NRRL B-2784 / 534).